Reading from the N-terminus, the 112-residue chain is Protein preY, mitochondrial (112 aa).

Residues 1-34 (MLTTTCRRLSQALQRPHALSAVAQRCLRAPGARS) constitute a mitochondrion transit peptide. The TRM112 domain occupies 49–95 (HPALLQFLVCPLSKKPLRYDASTNELINDELGIAYPIIDGVPNMIPQ).

It belongs to the PREY family. As to quaternary structure, interacts (via TRM112 domain) with NDUFAF5; the interaction is direct and stabilizes NDUFAF5 protein. Interacts with COQ5; the interaction is direct, stabilizes COQ5 protein and associates PYURF with COQ enzyme complex.

Its subcellular location is the mitochondrion. Its function is as follows. In mitochondria, S-adenosylmethionine-dependent methyltransferase chaperone that supports both coenzyme Q biosynthesis, by stabilizing its components, such as COQ5, and NADH:ubiquinone oxidoreductase complex (complex I, MT-ND1) assembly, by stabilizing complex I assembly factors, such as NDUFAF5. The sequence is that of Protein preY, mitochondrial (Pyurf) from Rattus norvegicus (Rat).